Reading from the N-terminus, the 313-residue chain is MVFFPHRHLLGIKGLSHQDITLLLDKADEAVKISRQREKKTSTLRGLTQINLFFEASTRTQSSFELAGKRLGADVMNMSVGNSSVKKGETLIDTAMTLNAMRPDVLVVRHSSAGAAALLAQKVACSVVNAGDGQHEHPTQALLDALTIRRAKGELSGITVAICGDVLHSRVARSNIILLNQMGARVRVVAPATLLPSGIRDMSVEVFNDMKEGLKNADVVMMLRLQRERMSGSFVPSVREYFHYYGLDAEKLKAAKEDALVMHPGPMNRGVEIASEVADGPQSVIESQVEMGVAVRMAVMETLLVSQNQGERV.

Residues Arg-59 and Thr-60 each coordinate carbamoyl phosphate. Lys-87 is an L-aspartate binding site. Arg-109, His-137, and Gln-140 together coordinate carbamoyl phosphate. L-aspartate contacts are provided by Arg-170 and Arg-224. The carbamoyl phosphate site is built by Gly-265 and Pro-266.

The protein belongs to the aspartate/ornithine carbamoyltransferase superfamily. ATCase family. Heterododecamer (2C3:3R2) of six catalytic PyrB chains organized as two trimers (C3), and six regulatory PyrI chains organized as three dimers (R2).

The catalysed reaction is carbamoyl phosphate + L-aspartate = N-carbamoyl-L-aspartate + phosphate + H(+). Its pathway is pyrimidine metabolism; UMP biosynthesis via de novo pathway; (S)-dihydroorotate from bicarbonate: step 2/3. Its function is as follows. Catalyzes the condensation of carbamoyl phosphate and aspartate to form carbamoyl aspartate and inorganic phosphate, the committed step in the de novo pyrimidine nucleotide biosynthesis pathway. The protein is Aspartate carbamoyltransferase catalytic subunit of Agrobacterium fabrum (strain C58 / ATCC 33970) (Agrobacterium tumefaciens (strain C58)).